We begin with the raw amino-acid sequence, 239 residues long: Aldehyde dehydrogenase, dimeric NADP-preferring (239 aa).

Residue cysteine 30 is part of the active site.

It belongs to the aldehyde dehydrogenase family. Homodimer.

The protein resides in the cytoplasm. The enzyme catalyses an aldehyde + NAD(+) + H2O = a carboxylate + NADH + 2 H(+). The catalysed reaction is octanal + NAD(+) + H2O = octanoate + NADH + 2 H(+). Functionally, ALDHs play a major role in the detoxification of alcohol-derived acetaldehyde. They are involved in the metabolism of corticosteroids, biogenic amines, neurotransmitters, and lipid peroxidation. Oxidizes medium and long chain aldehydes into non-toxic fatty acids. Preferentially oxidizes aromatic aldehyde substrates. Comprises about 50 percent of corneal epithelial soluble proteins. May play a role in preventing corneal damage caused by ultraviolet light. This chain is Aldehyde dehydrogenase, dimeric NADP-preferring (ALDH3A1), found in Bos taurus (Bovine).